A 238-amino-acid chain; its full sequence is Large ribosomal subunit protein uL1 (238 aa).

The protein belongs to the universal ribosomal protein uL1 family. As to quaternary structure, part of the 50S ribosomal subunit.

Its function is as follows. Binds directly to 23S rRNA. The L1 stalk is quite mobile in the ribosome, and is involved in E site tRNA release. Protein L1 is also a translational repressor protein, it controls the translation of the L11 operon by binding to its mRNA. This chain is Large ribosomal subunit protein uL1, found in Rickettsia prowazekii (strain Madrid E).